A 533-amino-acid polypeptide reads, in one-letter code: uncharacterized protein (533 aa).

The N-terminal stretch at 1-21 (MVKVWKIGFGVFLPTALLFSA) is a signal peptide. The N-palmitoyl cysteine moiety is linked to residue Cys22. The S-diacylglycerol cysteine moiety is linked to residue Cys22. The disordered stretch occupies residues 91–111 (LSKNKEGQTASQTRSSSEQTT). Positions 97-111 (GQTASQTRSSSEQTT) are enriched in polar residues.

The protein belongs to the MG067/MG068/MG395 family.

The protein resides in the cell membrane. This is an uncharacterized protein from Mycoplasma pneumoniae (strain ATCC 29342 / M129 / Subtype 1) (Mycoplasmoides pneumoniae).